Here is a 59-residue protein sequence, read N- to C-terminus: Photosystem II reaction center protein K (59 aa).

Residues 1–22 (MLNIFSLICLNSALYPSSLFFA) constitute a propeptide that is removed on maturation. Residues 38–58 (MPVIPLFFFLLAFVWQAAVSF) traverse the membrane as a helical segment.

This sequence belongs to the PsbK family. PSII is composed of 1 copy each of membrane proteins PsbA, PsbB, PsbC, PsbD, PsbE, PsbF, PsbH, PsbI, PsbJ, PsbK, PsbL, PsbM, PsbT, PsbX, PsbY, PsbZ, Psb30/Ycf12, at least 3 peripheral proteins of the oxygen-evolving complex and a large number of cofactors. It forms dimeric complexes.

The protein resides in the plastid. Its subcellular location is the chloroplast thylakoid membrane. In terms of biological role, one of the components of the core complex of photosystem II (PSII). PSII is a light-driven water:plastoquinone oxidoreductase that uses light energy to abstract electrons from H(2)O, generating O(2) and a proton gradient subsequently used for ATP formation. It consists of a core antenna complex that captures photons, and an electron transfer chain that converts photonic excitation into a charge separation. In Lactuca sativa (Garden lettuce), this protein is Photosystem II reaction center protein K.